We begin with the raw amino-acid sequence, 235 residues long: 7-cyano-7-deazaguanine synthase (235 aa).

Phe9 to Leu19 is an ATP binding site. Residues Cys197, Cys212, Cys215, and Cys218 each coordinate Zn(2+).

Belongs to the QueC family. Requires Zn(2+) as cofactor.

It carries out the reaction 7-carboxy-7-deazaguanine + NH4(+) + ATP = 7-cyano-7-deazaguanine + ADP + phosphate + H2O + H(+). The protein operates within purine metabolism; 7-cyano-7-deazaguanine biosynthesis. Catalyzes the ATP-dependent conversion of 7-carboxy-7-deazaguanine (CDG) to 7-cyano-7-deazaguanine (preQ(0)). This is 7-cyano-7-deazaguanine synthase from Polaromonas sp. (strain JS666 / ATCC BAA-500).